Here is a 698-residue protein sequence, read N- to C-terminus: tRNA (guanine(37)-N(1))-methyltransferase (698 aa).

Residues 207-242 form a disordered region; that stretch reads SPPSVSLTENQDGDPQAQDSLRAVAAPPSPSSRKRG. S-adenosyl-L-methionine is bound by residues H427, 465 to 466, 494 to 495, and N536; these read DL and DG.

It belongs to the class I-like SAM-binding methyltransferase superfamily. TRM5/TYW2 family. Monomer.

The protein resides in the mitochondrion matrix. It localises to the nucleus. It is found in the cytoplasm. It catalyses the reaction guanosine(37) in tRNA + S-adenosyl-L-methionine = N(1)-methylguanosine(37) in tRNA + S-adenosyl-L-homocysteine + H(+). In terms of biological role, specifically methylates the N1 position of guanosine-37 in various cytoplasmic and mitochondrial tRNAs. Methylation is not dependent on the nature of the nucleoside 5' of the target nucleoside. This is the first step in the biosynthesis of wybutosine (yW), a modified base adjacent to the anticodon of tRNAs and required for accurate decoding. The polypeptide is tRNA (guanine(37)-N(1))-methyltransferase (Leishmania braziliensis).